The sequence spans 465 residues: Clusterin-like protein 1 (465 aa).

An N-terminal signal peptide occupies residues 1-20 (MKPSLLVFTVYLLWLKDCHC). Positions 62–106 (MMERREEEHTNLMKTLKKCKEEKQEALKLMNEVQEHLEEEESLCQ) form a coiled coil. 4 cysteine pairs are disulfide-bonded: Cys105/Cys333, Cys116/Cys325, Cys119/Cys322, and Cys124/Cys315. N-linked (GlcNAc...) asparagine glycosylation is found at Asn196, Asn257, Asn285, Asn311, Asn351, Asn412, and Asn430.

This sequence belongs to the clusterin family. In terms of tissue distribution, retina-specific (at protein level). In the light-adapted retina, expressed in the outer segment of cone photoreceptors. In the dark-adapted retina, strongly expressed in the outer plexiform layer in the region of contact between the cone pedicles and second order neurons with little or no expression in the cone photoreceptor outer segments.

Its subcellular location is the secreted. The protein is Clusterin-like protein 1 (CLUL1) of Canis lupus familiaris (Dog).